The chain runs to 785 residues: Endonuclease MutS2 (785 aa).

Gly334–Thr341 contacts ATP. A Smr domain is found at Leu710 to Lys785.

It belongs to the DNA mismatch repair MutS family. MutS2 subfamily. In terms of assembly, homodimer. Binds to stalled ribosomes, contacting rRNA.

Functionally, endonuclease that is involved in the suppression of homologous recombination and thus may have a key role in the control of bacterial genetic diversity. Acts as a ribosome collision sensor, splitting the ribosome into its 2 subunits. Detects stalled/collided 70S ribosomes which it binds and splits by an ATP-hydrolysis driven conformational change. Acts upstream of the ribosome quality control system (RQC), a ribosome-associated complex that mediates the extraction of incompletely synthesized nascent chains from stalled ribosomes and their subsequent degradation. Probably generates substrates for RQC. The polypeptide is Endonuclease MutS2 (Lactobacillus helveticus (strain DPC 4571)).